An 858-amino-acid chain; its full sequence is M-phase phosphoprotein 8 (858 aa).

Residues 18–55 (VPDSIGRSPESEGVGAGDEEKDAATKGTVAVGDSEEDG) form a disordered region. 4 positions are modified to phosphoserine: S51, S85, S136, and S138. One can recognise a Chromo domain in the interval 59–118 (FEVERILDMKCEGGKNLYKVRWKGYTSEDDTWEPEVHLEDCKEVLLEFRKKLAENKAKAV). The histone H3K9me3 binding stretch occupies residues 80–87 (WKGYTSED). The tract at residues 129–175 (NDIFEADSDSDQQSDTKEDISPRKKKKKIKCKEETSPEDLRKKRTKM) is disordered. T144 carries the phosphothreonine modification. Phosphoserine; by CDK1 is present on residues S149 and S164. The segment covering 159-169 (CKEETSPEDLR) has biased composition (basic and acidic residues). S188 bears the Phosphoserine mark. Disordered stretches follow at residues 209 to 234 (ELKD…NKRA) and 250 to 300 (NRKT…DKTA). 3 positions are modified to phosphoserine: S267, S271, and S278. Residues 273–282 (ILEDDSEDFI) are compositionally biased toward acidic residues. Over residues 283 to 300 (SDNREENQNVRSVRDKTA) the composition is skewed to basic and acidic residues. Phosphoserine is present on S318. The disordered stretch occupies residues 321–431 (EDAGTRVRRK…YDLDKEEKAR (111 aa)). The segment covering 335 to 357 (RKFEEPKEIKKLESTNAFLERRA) has biased composition (basic and acidic residues). T385 carries the phosphothreonine; by CDK1 modification. Phosphoserine is present on residues S392 and S400. Residues 407–431 (EKEKKNEPKGKYQKRYDLDKEEKAR) are compositionally biased toward basic and acidic residues. A Phosphothreonine modification is found at T453. 4 ANK repeats span residues 598 to 627 (TGMT…KVNG), 631 to 660 (NGTT…FVNV), 664 to 693 (NGET…DCNI), and 697 to 726 (HQNS…TLSR).

In terms of assembly, homodimer. Interacts (via chromo domain) with histone H3K9me3. Has the highest affinity for H3K9me3, and lesser affinity for H3K9me2 and H3K9me1. Component of the HUSH complex; at least composed of TASOR, PPHLN1 and MPHOSPH8. Interacts with DNMT3, EHMT1 and SETDB1. Interacts with MORC2; the interaction associateS MORC2 with the HUSH complex which recruits MORC2 to heterochromatic loci. Interacts with ZNF638; leading to recruitment of the HUSH complex to unintegrated retroviral DNA. Interacts with TASOR. Post-translationally, phosphorylated in M (mitotic) phase. Phosphorylation by CDK1 promotes dissociation from chromatin. As to expression, expressed in the spermatogonia, spermatocytes and granular cells within the cerebellum.

The protein localises to the nucleus. It localises to the chromosome. In terms of biological role, heterochromatin component that specifically recognizes and binds methylated 'Lys-9' of histone H3 (H3K9me) and promotes recruitment of proteins that mediate epigenetic repression. Mediates recruitment of the HUSH complex to H3K9me3 sites: the HUSH complex is recruited to genomic loci rich in H3K9me3 and is required to maintain transcriptional silencing by promoting recruitment of SETDB1, a histone methyltransferase that mediates further deposition of H3K9me3, as well as MORC2. Binds H3K9me and promotes DNA methylation by recruiting DNMT3A to target CpG sites; these can be situated within the coding region of the gene. Mediates down-regulation of CDH1 expression. Also represses L1 retrotransposons in collaboration with MORC2 and, probably, SETDB1, the silencing is dependent of repressive epigenetic modifications, such as H3K9me3 mark. Silencing events often occur within introns of transcriptionally active genes, and lead to the down-regulation of host gene expression. The HUSH complex is also involved in the silencing of unintegrated retroviral DNA by being recruited by ZNF638: some part of the retroviral DNA formed immediately after infection remains unintegrated in the host genome and is transcriptionally repressed. This Mus musculus (Mouse) protein is M-phase phosphoprotein 8.